The sequence spans 480 residues: Flotillin-like protein 2 (480 aa).

Residue cysteine 37 is the site of S-palmitoyl cysteine attachment. Residues 237–257 adopt a coiled-coil conformation; sequence ENQREAEVAQANSELAKKKAA.

The protein belongs to the band 7/mec-2 family. Flotillin subfamily. In terms of processing, may be palmitoylated. Expressed in flowers in green pods. Primarily expressed in vascular tissues. Upon induction of nodulation, expansion of expression in the root cortex in the region of elongating root hairs, which will eventually become colonized by bacteria. Expressed in the infection zone in nodules.

Its subcellular location is the cell membrane. It is found in the membrane. It localises to the caveola. Functionally, may act as a scaffolding protein within caveolar membranes, functionally participating in formation of caveolae or caveolae-like vesicles. Required for early symbiotic events and nodules formation. This chain is Flotillin-like protein 2 (FLOT2), found in Medicago truncatula (Barrel medic).